We begin with the raw amino-acid sequence, 203 residues long: UPF0637 protein SERP0693 (203 aa).

The protein belongs to the UPF0637 family.

The sequence is that of UPF0637 protein SERP0693 from Staphylococcus epidermidis (strain ATCC 35984 / DSM 28319 / BCRC 17069 / CCUG 31568 / BM 3577 / RP62A).